Consider the following 347-residue polypeptide: Phenylalanine--tRNA ligase alpha subunit (347 aa).

Mg(2+) is bound at residue Glu265.

Belongs to the class-II aminoacyl-tRNA synthetase family. Phe-tRNA synthetase alpha subunit type 1 subfamily. In terms of assembly, tetramer of two alpha and two beta subunits. It depends on Mg(2+) as a cofactor.

The protein resides in the cytoplasm. The enzyme catalyses tRNA(Phe) + L-phenylalanine + ATP = L-phenylalanyl-tRNA(Phe) + AMP + diphosphate + H(+). This chain is Phenylalanine--tRNA ligase alpha subunit, found in Wolbachia pipientis wMel.